Consider the following 178-residue polypeptide: MTYQQAGRIAVLKRILGWVIFIPALISTLISLLKFMNTRQENKEGINAVMLDFTHVMIDMMQANTPFLNLFWYNSPTPNFNGGVNVMFWVIFILIFVGLALQDSGARMSRQARFLREGVEDQLILEKAKGEEGLTREQIESRIVVPHHTIFLQFFSLYILPVICIAAGYVFFSLLGFI.

Helical transmembrane passes span 15–35 (ILGW…LLKF), 80–100 (FNGG…VGLA), and 158–178 (YILP…LGFI).

The protein to Y.pestis YfeE.

Its subcellular location is the cell membrane. This is an uncharacterized protein from Escherichia coli (strain K12).